A 416-amino-acid polypeptide reads, in one-letter code: Homogentisate 1,2-dioxygenase (416 aa).

Histidine 275 serves as the catalytic Proton acceptor. Histidine 318 and glutamate 324 together coordinate Fe cation. Residues tyrosine 333 and histidine 354 each coordinate homogentisate. Histidine 354 lines the Fe cation pocket.

This sequence belongs to the homogentisate dioxygenase family. Hexamer; dimer of trimers. Fe cation is required as a cofactor.

The catalysed reaction is homogentisate + O2 = 4-maleylacetoacetate + H(+). The protein operates within amino-acid degradation; L-phenylalanine degradation; acetoacetate and fumarate from L-phenylalanine: step 4/6. Involved in the catabolism of homogentisate (2,5-dihydroxyphenylacetate or 2,5-OH-PhAc), a central intermediate in the degradation of phenylalanine and tyrosine. Catalyzes the oxidative ring cleavage of the aromatic ring of homogentisate to yield maleylacetoacetate. This Legionella pneumophila (strain Corby) protein is Homogentisate 1,2-dioxygenase.